The sequence spans 695 residues: Polyribonucleotide nucleotidyltransferase (695 aa).

Mg(2+) contacts are provided by aspartate 486 and aspartate 492. One can recognise a KH domain in the interval 553 to 612 (PRIETMQINTSKIATVIGPGGKQIRQIIERSGAQVDINDDGVINIAASTQESINKAKELI). The region spanning 622 to 690 (GKVYNGRVTS…EKGQLKLSHK (69 aa)) is the S1 motif domain.

The protein belongs to the polyribonucleotide nucleotidyltransferase family. Mg(2+) serves as cofactor.

The protein localises to the cytoplasm. The catalysed reaction is RNA(n+1) + phosphate = RNA(n) + a ribonucleoside 5'-diphosphate. Its function is as follows. Involved in mRNA degradation. Catalyzes the phosphorolysis of single-stranded polyribonucleotides processively in the 3'- to 5'-direction. This chain is Polyribonucleotide nucleotidyltransferase, found in Chlamydia trachomatis serovar A (strain ATCC VR-571B / DSM 19440 / HAR-13).